Reading from the N-terminus, the 242-residue chain is ATP synthase subunit a (242 aa).

5 consecutive transmembrane segments (helical) span residues 21-41 (LSSIMMLIITAVIVFVIAIIC), 79-99 (FHFLAVTLIFFIFVSNMLGLP), 116-136 (DATVTLTLSTLIILLTHFYGV), 173-193 (LYGNIFAGELLLGLLAGLVTG), and 198-218 (AWGWIIGLPGLVVWQGFSIFI).

The protein belongs to the ATPase A chain family. F-type ATPases have 2 components, CF(1) - the catalytic core - and CF(0) - the membrane proton channel. CF(1) has five subunits: alpha(3), beta(3), gamma(1), delta(1), epsilon(1). CF(0) has three main subunits: a(1), b(2) and c(9-12). The alpha and beta chains form an alternating ring which encloses part of the gamma chain. CF(1) is attached to CF(0) by a central stalk formed by the gamma and epsilon chains, while a peripheral stalk is formed by the delta and b chains.

The protein localises to the cell membrane. Key component of the proton channel; it plays a direct role in the translocation of protons across the membrane. This chain is ATP synthase subunit a, found in Staphylococcus saprophyticus subsp. saprophyticus (strain ATCC 15305 / DSM 20229 / NCIMB 8711 / NCTC 7292 / S-41).